Reading from the N-terminus, the 570-residue chain is Adenine deaminase 2 (570 aa).

Belongs to the metallo-dependent hydrolases superfamily. Adenine deaminase family. The cofactor is Mn(2+).

The catalysed reaction is adenine + H2O + H(+) = hypoxanthine + NH4(+). In Carboxydothermus hydrogenoformans (strain ATCC BAA-161 / DSM 6008 / Z-2901), this protein is Adenine deaminase 2.